The primary structure comprises 222 residues: Homing endonuclease I-ApeI (222 aa).

As to quaternary structure, probably functions as a monomer. Requires Mg(2+) as cofactor. It depends on Mn(2+) as a cofactor.

Functionally, endonuclease involved in 16S rRNA intron I-alpha homing. Recognizes the minimal target 5'-GCAAGGCTGAAACTTAAAGG-3'; generates 4 base 3' protruding ends 5'-AAAC-3' and 5'-GTTT-3'. The protein is Homing endonuclease I-ApeI (apeI) of Aeropyrum pernix (strain ATCC 700893 / DSM 11879 / JCM 9820 / NBRC 100138 / K1).